The chain runs to 538 residues: Phosphoenolpyruvate carboxykinase (ATP) (538 aa).

Substrate contacts are provided by arginine 64, tyrosine 205, and lysine 211. Residues lysine 211, histidine 230, and 246–254 (GLSGTGKTT) contribute to the ATP site. Mn(2+) contacts are provided by lysine 211 and histidine 230. Position 267 (aspartate 267) interacts with Mn(2+). ATP is bound by residues glutamate 295, arginine 331, 447-448 (RI), and threonine 453. Arginine 331 provides a ligand contact to substrate.

Belongs to the phosphoenolpyruvate carboxykinase (ATP) family. In terms of assembly, monomer. The cofactor is Mn(2+).

The protein resides in the cytoplasm. The catalysed reaction is oxaloacetate + ATP = phosphoenolpyruvate + ADP + CO2. It participates in carbohydrate biosynthesis; gluconeogenesis. Involved in the gluconeogenesis. Catalyzes the conversion of oxaloacetate (OAA) to phosphoenolpyruvate (PEP) through direct phosphoryl transfer between the nucleoside triphosphate and OAA. The protein is Phosphoenolpyruvate carboxykinase (ATP) of Haemophilus influenzae (strain PittEE).